The primary structure comprises 728 residues: Phosphoribosylformylglycinamidine synthase subunit PurL (728 aa).

Histidine 42 is an active-site residue. Positions 45 and 84 each coordinate ATP. Residue glutamate 86 participates in Mg(2+) binding. Substrate is bound by residues 87–90 (SHNH) and arginine 109. The active-site Proton acceptor is histidine 88. A Mg(2+)-binding site is contributed by aspartate 110. Glutamine 237 serves as a coordination point for substrate. A Mg(2+)-binding site is contributed by aspartate 265. 309 to 311 (ESQ) is a substrate binding site. ATP-binding residues include aspartate 491 and glycine 528. A Mg(2+)-binding site is contributed by asparagine 529. Serine 531 contributes to the substrate binding site.

It belongs to the FGAMS family. Monomer. Part of the FGAM synthase complex composed of 1 PurL, 1 PurQ and 2 PurS subunits.

The protein resides in the cytoplasm. It carries out the reaction N(2)-formyl-N(1)-(5-phospho-beta-D-ribosyl)glycinamide + L-glutamine + ATP + H2O = 2-formamido-N(1)-(5-O-phospho-beta-D-ribosyl)acetamidine + L-glutamate + ADP + phosphate + H(+). The protein operates within purine metabolism; IMP biosynthesis via de novo pathway; 5-amino-1-(5-phospho-D-ribosyl)imidazole from N(2)-formyl-N(1)-(5-phospho-D-ribosyl)glycinamide: step 1/2. In terms of biological role, part of the phosphoribosylformylglycinamidine synthase complex involved in the purines biosynthetic pathway. Catalyzes the ATP-dependent conversion of formylglycinamide ribonucleotide (FGAR) and glutamine to yield formylglycinamidine ribonucleotide (FGAM) and glutamate. The FGAM synthase complex is composed of three subunits. PurQ produces an ammonia molecule by converting glutamine to glutamate. PurL transfers the ammonia molecule to FGAR to form FGAM in an ATP-dependent manner. PurS interacts with PurQ and PurL and is thought to assist in the transfer of the ammonia molecule from PurQ to PurL. The protein is Phosphoribosylformylglycinamidine synthase subunit PurL of Campylobacter jejuni subsp. jejuni serotype O:6 (strain 81116 / NCTC 11828).